A 316-amino-acid chain; its full sequence is N-acetylmuramic acid 6-phosphate etherase (316 aa).

Residues 1–23 (MAGFDPTLQPSDDRGHLLTEQSN) form a disordered region. The SIS domain maps to 66–229 (ISKRLSSGGR…STTVMVRLGK (164 aa)). Glu-94 functions as the Proton donor in the catalytic mechanism. The active site involves Glu-125.

It belongs to the GCKR-like family. MurNAc-6-P etherase subfamily. In terms of assembly, homodimer.

The enzyme catalyses N-acetyl-D-muramate 6-phosphate + H2O = N-acetyl-D-glucosamine 6-phosphate + (R)-lactate. Its pathway is amino-sugar metabolism; N-acetylmuramate degradation. Functionally, specifically catalyzes the cleavage of the D-lactyl ether substituent of MurNAc 6-phosphate, producing GlcNAc 6-phosphate and D-lactate. The sequence is that of N-acetylmuramic acid 6-phosphate etherase from Synechococcus sp. (strain CC9902).